Here is an 81-residue protein sequence, read N- to C-terminus: MSLPAFTEISSFSNTEISVAIIETENQLFNLRFKKATRQSFKSHEIKNAKRRLAQLKTLLSLRLENLDQKDDNLINTLITN.

Belongs to the universal ribosomal protein uL29 family.

It localises to the plastid. The protein localises to the chloroplast. The protein is Large ribosomal subunit protein uL29c of Phaeodactylum tricornutum (strain CCAP 1055/1).